Here is a 199-residue protein sequence, read N- to C-terminus: Holliday junction branch migration complex subunit RuvA (199 aa).

Positions 1–64 (MIALLTGKLA…EDAINLYGFR (64 aa)) are domain I. The segment at 65–143 (TQQEKELFQL…KLGLAQPQAG (79 aa)) is domain II. The tract at residues 144–148 (GTTAP) is flexible linker. The interval 149–199 (AKQEIRDDVLSALINLGYKEAVVQKALAELKVTEDATVELVLKQALKILMK) is domain III.

Belongs to the RuvA family. In terms of assembly, homotetramer. Forms an RuvA(8)-RuvB(12)-Holliday junction (HJ) complex. HJ DNA is sandwiched between 2 RuvA tetramers; dsDNA enters through RuvA and exits via RuvB. An RuvB hexamer assembles on each DNA strand where it exits the tetramer. Each RuvB hexamer is contacted by two RuvA subunits (via domain III) on 2 adjacent RuvB subunits; this complex drives branch migration. In the full resolvosome a probable DNA-RuvA(4)-RuvB(12)-RuvC(2) complex forms which resolves the HJ.

The protein resides in the cytoplasm. Functionally, the RuvA-RuvB-RuvC complex processes Holliday junction (HJ) DNA during genetic recombination and DNA repair, while the RuvA-RuvB complex plays an important role in the rescue of blocked DNA replication forks via replication fork reversal (RFR). RuvA specifically binds to HJ cruciform DNA, conferring on it an open structure. The RuvB hexamer acts as an ATP-dependent pump, pulling dsDNA into and through the RuvAB complex. HJ branch migration allows RuvC to scan DNA until it finds its consensus sequence, where it cleaves and resolves the cruciform DNA. The protein is Holliday junction branch migration complex subunit RuvA of Citrifermentans bemidjiense (strain ATCC BAA-1014 / DSM 16622 / JCM 12645 / Bem) (Geobacter bemidjiensis).